The sequence spans 438 residues: Thymidine phosphorylase (438 aa).

This sequence belongs to the thymidine/pyrimidine-nucleoside phosphorylase family. Homodimer.

The enzyme catalyses thymidine + phosphate = 2-deoxy-alpha-D-ribose 1-phosphate + thymine. The protein operates within pyrimidine metabolism; dTMP biosynthesis via salvage pathway; dTMP from thymine: step 1/2. The enzymes which catalyze the reversible phosphorolysis of pyrimidine nucleosides are involved in the degradation of these compounds and in their utilization as carbon and energy sources, or in the rescue of pyrimidine bases for nucleotide synthesis. The polypeptide is Thymidine phosphorylase (Sinorhizobium fredii (strain NBRC 101917 / NGR234)).